Reading from the N-terminus, the 356-residue chain is MSADAAAGEPLPRLCCLEKGPNGYGFHLHGEKGKVGQFIRLVEPGSPAEKSGLLAGDRLVEVNGENVEKETHQQVVSRIRAALNAVRLLVVDPETDEQLKKLGVPIREELLRAQEKSEHTEPPAAADTKKAGDQNEAEKSHLERCELRPRLCTMKKGPNGYGFNLHSDKSKPGQFIRAVDPDSPAEASGLRAQDRIVEVNGVCMEGKQHGDVVSAIKAGGDEAKLLVVDKETDEFFKKCRVTPSQEHLDGPLPEPFSNGEIQKENSREALVEPASESPRPALARSASSDTSEELNAQDSPKRHDSTEPSSTSSSSDPILDFNISLAVAKERAHQKRSSKRAPQMDWSKKNELFSNL.

S2 is subject to N-acetylserine. A phosphoserine mark is found at S2 and S46. The 81-residue stretch at 14–94 (LCCLEKGPNG…AVRLLVVDPE (81 aa)) folds into the PDZ 1 domain. Residues 113-142 (AQEKSEHTEPPAAADTKKAGDQNEAEKSHL) form a disordered region. One can recognise a PDZ 2 domain in the interval 151–231 (LCTMKKGPNG…EAKLLVVDKE (81 aa)). Positions 265-356 (NSREALVEPA…SKKNELFSNL (92 aa)) are disordered. 4 positions are modified to phosphoserine: S266, S277, S287, and S288. Low complexity predominate over residues 272-288 (EPASESPRPALARSASS). T290 is modified (phosphothreonine). A phosphoserine mark is found at S291 and S299. Residues 307–317 (EPSSTSSSSDP) are compositionally biased toward low complexity. Over residues 346–356 (WSKKNELFSNL) the composition is skewed to basic and acidic residues.

Homodimer, and heterodimer with NHERF2. Binds the N-termini of EZR, RDX and MSN. Binds the C-termini of PDGFRA, PDGFRB, ADRB2, NOS2 and CFTR. Binds ARHGAP17, EPI64, RACK1, OPRK1, GNAQ, CTNNB1 and PLCB3. Binds PDZK1. Interacts with CLCN3. Binds the C-terminus of PAG1. In resting T-cells, part of a PAG1-NHERF1-MSN complex which is disrupted upon TCR activation. Forms a complex with CFTR and SLC4A7. Forms a complex with SLC4A7 and ATP6V1B1. Interacts with TRPC4 (via the PDZ-binding domain). Directly interacts with HTR4. Interacts (via the PDZ 1 domain) with PODXL (via the C-terminal PDZ-binding motif DTHL); interaction is not detected in glomerular epithelium cells. Interacts (via the PDZ 1 domain) with PODXL (via the C-terminal PDZ-binding motif DTHL); the interaction take place early in the secretory pathway and is necessary for its apical membrane sorting. Interacts with SLC26A3. Interacts with MCC. Interacts with SLC34A1. Interacts (via the PDZ domains) with SLC26A6 isoform 4 and isoform 5. Interacts (via PDZ domains) with ACE2 (via PDZ-binding motif); the interaction may enhance ACE2 membrane residence.

The protein resides in the cytoplasm. The protein localises to the apical cell membrane. It localises to the cell projection. It is found in the filopodium. Its subcellular location is the ruffle. The protein resides in the microvillus. The protein localises to the endomembrane system. Its function is as follows. Scaffold protein that connects plasma membrane proteins with members of the ezrin/moesin/radixin family and thereby helps to link them to the actin cytoskeleton and to regulate their surface expression. Necessary for recycling of internalized ADRB2. Was first known to play a role in the regulation of the activity and subcellular location of SLC9A3. Necessary for cAMP-mediated phosphorylation and inhibition of SLC9A3. Involved in sperm capacitation. May participate in the regulation of the chloride and bicarbonate homeostasis in spermatozoa. May enhance Wnt signaling. May participate in HTR4 targeting to microvilli. Involved in the regulation of phosphate reabsorption in the renal proximal tubules. The protein is Na(+)/H(+) exchange regulatory cofactor NHE-RF1 (Nherf1) of Rattus norvegicus (Rat).